The sequence spans 417 residues: Phosphoglycerate kinase 2 (417 aa).

An N-acetylserine modification is found at Ser2. 2 positions are modified to phosphoserine: Ser2 and Ser4. Lys11 carries the N6-acetyllysine modification. (2R)-3-phosphoglycerate is bound by residues Val23, Asp24, Phe25, Asn26, Gln38, Arg39, Ser62, His63, Gly65, and Arg66. Residues Lys75, Lys86, and Lys97 each carry the N6-acetyllysine modification. Positions 122 and 123 each coordinate (2R)-3-phosphoglycerate. Residues Lys131 and Lys146 each carry the N6-acetyllysine modification. Residues His170 and Arg171 each contribute to the (2R)-3-phosphoglycerate site. Tyr196 carries the phosphotyrosine modification. Lys199 bears the N6-acetyllysine mark. Gly214 is a binding site for ADP. Gly214 contributes to the CDP binding site. AMP contacts are provided by Ala215 and Lys216. Ala215 is an ATP binding site. Ala215 is a binding site for Mg(2+). The Mg(2+) site is built by Ala218 and Asp219. Residue Asp219 participates in CDP binding. Lys220 lines the AMP pocket. Lys220 provides a ligand contact to ATP. Residue Gly238 participates in ADP binding. Gly238 contacts CDP. Gly239 contacts AMP. Gly239 contacts ATP. Residues Lys267 and Lys291 each carry the N6-acetyllysine modification. Ala313 is a binding site for AMP. Ala313 serves as a coordination point for ATP. CDP is bound by residues Gly338 and Phe343. Phe343 lines the ADP pocket. Glu344 provides a ligand contact to AMP. Residues Glu344, Asp375, and Thr376 each coordinate ATP. Mg(2+) is bound at residue Asp375.

Belongs to the phosphoglycerate kinase family. Monomer. Mg(2+) is required as a cofactor. In terms of tissue distribution, testis specific.

It is found in the cytoplasm. It catalyses the reaction (2R)-3-phosphoglycerate + ATP = (2R)-3-phospho-glyceroyl phosphate + ADP. The protein operates within carbohydrate degradation; glycolysis; pyruvate from D-glyceraldehyde 3-phosphate: step 2/5. Essential for sperm motility and male fertility but is not required for the completion of spermatogenesis. This chain is Phosphoglycerate kinase 2, found in Sus scrofa (Pig).